The primary structure comprises 164 residues: Flavodoxin (164 aa).

Residues Ile-4 to Lys-160 enclose the Flavodoxin-like domain.

This sequence belongs to the flavodoxin family. FMN is required as a cofactor.

Its function is as follows. Low-potential electron donor to a number of redox enzymes. This chain is Flavodoxin (fldA), found in Helicobacter pylori (strain ATCC 700392 / 26695) (Campylobacter pylori).